The primary structure comprises 158 residues: 2-C-methyl-D-erythritol 2,4-cyclodiphosphate synthase (158 aa).

Residues aspartate 8 and histidine 10 each coordinate a divalent metal cation. 4-CDP-2-C-methyl-D-erythritol 2-phosphate is bound by residues 8 to 10 (DVH) and 34 to 35 (HS). Histidine 42 provides a ligand contact to a divalent metal cation. 4-CDP-2-C-methyl-D-erythritol 2-phosphate is bound by residues 56–58 (DIG), 132–135 (TTNE), and arginine 142.

Belongs to the IspF family. Homotrimer. A divalent metal cation is required as a cofactor.

It carries out the reaction 4-CDP-2-C-methyl-D-erythritol 2-phosphate = 2-C-methyl-D-erythritol 2,4-cyclic diphosphate + CMP. It functions in the pathway isoprenoid biosynthesis; isopentenyl diphosphate biosynthesis via DXP pathway; isopentenyl diphosphate from 1-deoxy-D-xylulose 5-phosphate: step 4/6. Its function is as follows. Involved in the biosynthesis of isopentenyl diphosphate (IPP) and dimethylallyl diphosphate (DMAPP), two major building blocks of isoprenoid compounds. Catalyzes the conversion of 4-diphosphocytidyl-2-C-methyl-D-erythritol 2-phosphate (CDP-ME2P) to 2-C-methyl-D-erythritol 2,4-cyclodiphosphate (ME-CPP) with a corresponding release of cytidine 5-monophosphate (CMP). In Chlorobium phaeobacteroides (strain DSM 266 / SMG 266 / 2430), this protein is 2-C-methyl-D-erythritol 2,4-cyclodiphosphate synthase.